The sequence spans 2324 residues: Serine/threonine-protein kinase MEC1 (2324 aa).

Residues 1349-1901 (VLAQKSLETN…LWYITVLLNS (553 aa)) enclose the FAT domain. The region spanning 2005 to 2308 (FTPHYKVYSS…QVDTVVQQAS (304 aa)) is the PI3K/PI4K catalytic domain. The tract at residues 2011–2017 (VYSSLKK) is G-loop. A catalytic loop region spans residues 2177 to 2185 (GLGDRHLEN). The interval 2197 to 2221 (HVDFDCLFEKGKTLPVPEIVPFRLT) is activation loop. The region spanning 2292–2324 (LPLSVPGQVDTVVQQASSDENLAQMYIGWLPFW) is the FATC domain.

This sequence belongs to the PI3/PI4-kinase family. ATM subfamily.

The protein resides in the nucleus. It catalyses the reaction L-seryl-[protein] + ATP = O-phospho-L-seryl-[protein] + ADP + H(+). It carries out the reaction L-threonyl-[protein] + ATP = O-phospho-L-threonyl-[protein] + ADP + H(+). Functionally, serine/threonine protein kinase which activates checkpoint signaling upon genotoxic stresses such as ionizing radiation (IR), ultraviolet light (UV), or DNA replication stalling, thereby acting as a DNA damage sensor. Recognizes the substrate consensus sequence [ST]-Q. Recruited to DNA lesions in order to initiate the DNA repair by homologous recombination. Phosphorylates histone H2A to form H2AS128ph (gamma-H2A) at sites of DNA damage, also involved in the regulation of DNA damage response mechanism. Required for cell growth and meiotic recombination. The polypeptide is Serine/threonine-protein kinase MEC1 (MEC1) (Eremothecium gossypii (strain ATCC 10895 / CBS 109.51 / FGSC 9923 / NRRL Y-1056) (Yeast)).